Here is a 304-residue protein sequence, read N- to C-terminus: Secreted mono- and diacylglycerol lipase LIP1 (304 aa).

A signal peptide spans 1-19 (MLFSRFVLLAFGSVAAVSA). Thr-32 is a glycosylation site (O-linked (Man...) threonine). Residues Cys-57 and Cys-297 are joined by a disulfide bond. Catalysis depends on Ser-171, which acts as the Nucleophile. The active site involves Asp-228. An N-linked (GlcNAc...) asparagine glycan is attached at Asn-253. His-281 is a catalytic residue.

Belongs to the AB hydrolase superfamily. Lipase family. Class 3 subfamily.

The protein localises to the secreted. The protein resides in the cell wall. The enzyme catalyses a monoacylglycerol + H2O = glycerol + a fatty acid + H(+). It catalyses the reaction a diacylglycerol + H2O = a monoacylglycerol + a fatty acid + H(+). With respect to regulation, RHC 80267, a well-known inhibitor of diacylglycerol lipases from mammals, also acts as an inhibitor for LIP1/SMG1. Secreted lipase involved in Dandruff and seborrheic dermatitis (D/SD) probably via lipase-mediated breakdown of sebaceous lipids and release of irritating free fatty acids. Shows activity against monoglyceride and diglyceride substrates, but not triglyceride substrates and does not exhibit regio-selective production of diacylglycerols. Able to hydrolyze diacylglycerols such as distearin, dilinolein, dipalmitoylglycerol and dipalmitolein. Cleaves oleic acid from 1,2 isomers of diolein on both the 1 and the 2 position of the glycerol backbone, resulting mainly in free fatty acids but no monoolein is detected. Shows activity on monoolein and liberates mostly free fatty acids, but can also perform the reverse reaction and produce diolein. The chain is Secreted mono- and diacylglycerol lipase LIP1 from Malassezia globosa (strain ATCC MYA-4612 / CBS 7966) (Dandruff-associated fungus).